A 91-amino-acid chain; its full sequence is Large ribosomal subunit protein uL23c (91 aa).

It belongs to the universal ribosomal protein uL23 family. Part of the 50S ribosomal subunit.

It localises to the plastid. The protein resides in the chloroplast. In terms of biological role, binds to 23S rRNA. This Huperzia lucidula (Shining clubmoss) protein is Large ribosomal subunit protein uL23c (rpl23).